A 754-amino-acid polypeptide reads, in one-letter code: 5-methyltetrahydropteroyltriglutamate--homocysteine methyltransferase (754 aa).

5-methyltetrahydropteroyltri-L-glutamate-binding positions include 17-20 (RELK) and Lys-117. L-homocysteine-binding positions include 431–433 (IGS) and Glu-484. L-methionine is bound by residues 431 to 433 (IGS) and Glu-484. 5-methyltetrahydropteroyltri-L-glutamate-binding positions include 515–516 (RC) and Trp-561. Asp-599 is a binding site for L-homocysteine. Asp-599 contacts L-methionine. Position 605 (Glu-605) interacts with 5-methyltetrahydropteroyltri-L-glutamate. Residues His-641, Cys-643, and Glu-665 each coordinate Zn(2+). His-694 functions as the Proton donor in the catalytic mechanism. A Zn(2+)-binding site is contributed by Cys-726.

It belongs to the vitamin-B12 independent methionine synthase family. Zn(2+) is required as a cofactor.

The catalysed reaction is 5-methyltetrahydropteroyltri-L-glutamate + L-homocysteine = tetrahydropteroyltri-L-glutamate + L-methionine. Its pathway is amino-acid biosynthesis; L-methionine biosynthesis via de novo pathway; L-methionine from L-homocysteine (MetE route): step 1/1. In terms of biological role, catalyzes the transfer of a methyl group from 5-methyltetrahydrofolate to homocysteine resulting in methionine formation. This is 5-methyltetrahydropteroyltriglutamate--homocysteine methyltransferase from Salmonella typhimurium (strain LT2 / SGSC1412 / ATCC 700720).